The primary structure comprises 399 residues: Tryptophan synthase beta chain (399 aa).

An N6-(pyridoxal phosphate)lysine modification is found at K92.

Belongs to the TrpB family. In terms of assembly, tetramer of two alpha and two beta chains. Pyridoxal 5'-phosphate serves as cofactor.

The catalysed reaction is (1S,2R)-1-C-(indol-3-yl)glycerol 3-phosphate + L-serine = D-glyceraldehyde 3-phosphate + L-tryptophan + H2O. It functions in the pathway amino-acid biosynthesis; L-tryptophan biosynthesis; L-tryptophan from chorismate: step 5/5. In terms of biological role, the beta subunit is responsible for the synthesis of L-tryptophan from indole and L-serine. The polypeptide is Tryptophan synthase beta chain (Legionella pneumophila (strain Corby)).